The sequence spans 762 residues: MDVSALLTSAGINIAICVVLVSLYSILRKQPANYCVYFGRLLSDGRVKRHDPRWYERFAPSPSWLVKAWETTEEEMLAAAGLDAVVFIRMVICSIRIFSIVAVVCLAFVLPVNYYGQKMEHKEVHLESLGVFTIENLNPRSRWLWVHCLSLYIISSAACALLYFEYKNIAKKRLAHISGSASKPSHFTVLIRAIPQSPDQSYSETVSKYFTNYYAPSYVSHLMVYRDGFIHRLMNETERMCQAIKHVSPDLSCNPSLKSCVLCGPAATNSFQIISNETDSVKGLELGELTLTTTEEERPVAFVFFKSRYDALVVSEVLQTPNPMLWVADLAPEPHDVHWRNLRIPYRQLWMRRIATLVGAIAFMFVFLFPVTFVQGLTQLPTLSKNFPFLKDLLNRRFMEQVITGYLPSVILVLFFYTVPPLMMYFSTLEGCVSRSQRKKSACLKILYFTIWNVFFVNILSGSVIRQFTVLNSVRDVPAQLAKLVPAQAGFFMTYCFTSGWAGLACEIMQPVGLIWNLIAKVIVKNKEESYETLRFPYHTEIPRLLLFGLLGFTNSVIAPLILPFLLIYFFFAYLIYKNQIINVYITKYESGGQYWPVFHNTTIFSLILSQVIALGFFGLKLSTVASGFTIPLILLTLLFSEYCRQRFAPIFQKYPAEILIAMDRADEMTGKMEEIHNNLKVAYSQIPTCSEESSKAGCTSPCSDQELPDSEELKPEKENLKADYIWEFQRSKSGLDLEVKSCPSASPIRNSPGFAEIYKRT.

The next 10 membrane-spanning stretches (helical) occupy residues 3 to 23 (VSAL…LVSL), 90 to 110 (MVIC…AFVL), 144 to 164 (LWVH…LLYF), 354 to 374 (IATL…VTFV), 402 to 422 (VITG…VPPL), 445 to 465 (KILY…GSVI), 500 to 520 (GWAG…NLIA), 557 to 577 (VIAP…YLIY), 594 to 614 (QYWP…QVIA), and 615 to 635 (LGFF…PLIL).

It belongs to the CSC1 (TC 1.A.17) family.

It localises to the membrane. Acts as an osmosensitive calcium-permeable cation channel. The sequence is that of Hyperosmolality-gated Ca2+ permeable channel 2.2 from Arabidopsis thaliana (Mouse-ear cress).